Here is a 47-residue protein sequence, read N- to C-terminus: Defensin-like protein 1 (47 aa).

Cystine bridges form between Cys-3–Cys-47, Cys-14–Cys-36, Cys-20–Cys-41, and Cys-24–Cys-43.

The protein belongs to the DEFL family. Protease inhibitor I18 (RTI/MTI-2) subfamily.

The protein is Defensin-like protein 1 of Sorghum bicolor (Sorghum).